A 416-amino-acid chain; its full sequence is Multifunctional CCA protein (416 aa).

Positions 8 and 11 each coordinate ATP. Positions 8 and 11 each coordinate CTP. Mg(2+)-binding residues include Asp-21 and Asp-23. ATP is bound by residues Arg-91, Arg-137, and Arg-140. Residues Arg-91, Arg-137, and Arg-140 each contribute to the CTP site. An HD domain is found at 228 to 329 (TGLHTMLVLA…IKLFDKADFW (102 aa)).

Belongs to the tRNA nucleotidyltransferase/poly(A) polymerase family. Bacterial CCA-adding enzyme type 1 subfamily. Monomer. Can also form homodimers and oligomers. Mg(2+) is required as a cofactor. It depends on Ni(2+) as a cofactor.

The enzyme catalyses a tRNA precursor + 2 CTP + ATP = a tRNA with a 3' CCA end + 3 diphosphate. The catalysed reaction is a tRNA with a 3' CCA end + 2 CTP + ATP = a tRNA with a 3' CCACCA end + 3 diphosphate. Catalyzes the addition and repair of the essential 3'-terminal CCA sequence in tRNAs without using a nucleic acid template. Adds these three nucleotides in the order of C, C, and A to the tRNA nucleotide-73, using CTP and ATP as substrates and producing inorganic pyrophosphate. tRNA 3'-terminal CCA addition is required both for tRNA processing and repair. Also involved in tRNA surveillance by mediating tandem CCA addition to generate a CCACCA at the 3' terminus of unstable tRNAs. While stable tRNAs receive only 3'-terminal CCA, unstable tRNAs are marked with CCACCA and rapidly degraded. The protein is Multifunctional CCA protein of Shewanella sp. (strain ANA-3).